We begin with the raw amino-acid sequence, 336 residues long: Alcohol dehydrogenase, propanol-preferring (336 aa).

C37, H58, C89, C92, C95, C103, and C145 together coordinate Zn(2+).

The protein belongs to the zinc-containing alcohol dehydrogenase family. Zn(2+) is required as a cofactor.

It catalyses the reaction a primary alcohol + NAD(+) = an aldehyde + NADH + H(+). It carries out the reaction a secondary alcohol + NAD(+) = a ketone + NADH + H(+). Functionally, preferred specificity is towards 1-propanol. This chain is Alcohol dehydrogenase, propanol-preferring (adhP), found in Escherichia coli (strain K12).